Consider the following 155-residue polypeptide: Ribosomal RNA large subunit methyltransferase H (155 aa).

S-adenosyl-L-methionine-binding positions include leucine 72, glycine 103, and 122 to 127 (LSPLTL).

It belongs to the RNA methyltransferase RlmH family. In terms of assembly, homodimer.

It localises to the cytoplasm. The catalysed reaction is pseudouridine(1915) in 23S rRNA + S-adenosyl-L-methionine = N(3)-methylpseudouridine(1915) in 23S rRNA + S-adenosyl-L-homocysteine + H(+). Functionally, specifically methylates the pseudouridine at position 1915 (m3Psi1915) in 23S rRNA. The chain is Ribosomal RNA large subunit methyltransferase H from Mannheimia succiniciproducens (strain KCTC 0769BP / MBEL55E).